A 205-amino-acid polypeptide reads, in one-letter code: Spermatogenesis-associated protein 24 (205 aa).

Positions 17 to 166 (LALDQLRDVI…QQKQIFRNHM (150 aa)) form a coiled coil. Residues 138–185 (EDILNGKENEIKELQQVISQQKQIFRNHMSDFRIQKQQESYMAQVLDQ) form a required for interaction with CBX5 and TBPL1 region. The tract at residues 180 to 205 (AQVLDQKHKKASGTRQARSHQHPREK) is disordered. The span at 186-205 (KHKKASGTRQARSHQHPREK) shows a compositional bias: basic residues.

It belongs to the SPATA24 family. As to quaternary structure, homodimer. Interacts with CBX3, CBX5, GMNN, GTF2B, TBPL1 and the polycomb proteins PHCF2, RNF2 and SCMH1 but not with CBX1 or PCGF2.

Its subcellular location is the cytoplasm. It is found in the nucleus. The protein localises to the nucleolus. The protein resides in the nucleoplasm. Binds DNA with high affinity but does not bind to TATA boxes. Synergises with GMNN and TBP in activation of TATA box-containing promoters and with GMNN and TBPL1 in activation of the NF1 TATA-less promoter. May play a role in cytoplasm movement and removal during spermiogenesis. In Homo sapiens (Human), this protein is Spermatogenesis-associated protein 24 (SPATA24).